The primary structure comprises 376 residues: Heptahelical transmembrane protein ADIPOR1 (376 aa).

The Cytoplasmic portion of the chain corresponds to Met1–Thr90. The segment at Pro20 to Lys46 is disordered. The chain crosses the membrane as a helical span at residues Ile91–Leu111. Topologically, residues Gly112–Pro179 are extracellular. Residues Phe180–Leu200 form a helical membrane-spanning segment. The Cytoplasmic portion of the chain corresponds to Ser201 to Tyr216. The chain crosses the membrane as a helical span at residues Thr217–Cys237. Residues Glu238 to Arg240 are Extracellular-facing. The helical transmembrane segment at Trp241–Met261 threads the bilayer. Residues Ser262 to Arg274 are Cytoplasmic-facing. The helical transmembrane segment at Ala275–Val295 threads the bilayer. Topologically, residues Asn296–Asn303 are extracellular. Residues Val304–Leu324 traverse the membrane as a helical segment. Topologically, residues Thr325–Gln344 are cytoplasmic. A helical membrane pass occupies residues Ile345–Ile365. At Gln366–Pro376 the chain is on the extracellular side.

Belongs to the ADIPOR family.

It localises to the membrane. Functionally, may play a role in abiotic stress response. This chain is Heptahelical transmembrane protein ADIPOR1 (ADIPOR1), found in Oryza sativa subsp. japonica (Rice).